The following is a 188-amino-acid chain: Pyridoxal 5'-phosphate synthase subunit PdxT (188 aa).

46–48 (GES) serves as a coordination point for L-glutamine. The Nucleophile role is filled by Cys78. Residues Arg105 and 134–135 (IR) contribute to the L-glutamine site. Residues His170 and Glu172 each act as charge relay system in the active site.

The protein belongs to the glutaminase PdxT/SNO family. In terms of assembly, in the presence of PdxS, forms a dodecamer of heterodimers. Only shows activity in the heterodimer.

The catalysed reaction is aldehydo-D-ribose 5-phosphate + D-glyceraldehyde 3-phosphate + L-glutamine = pyridoxal 5'-phosphate + L-glutamate + phosphate + 3 H2O + H(+). It carries out the reaction L-glutamine + H2O = L-glutamate + NH4(+). It participates in cofactor biosynthesis; pyridoxal 5'-phosphate biosynthesis. In terms of biological role, catalyzes the hydrolysis of glutamine to glutamate and ammonia as part of the biosynthesis of pyridoxal 5'-phosphate. The resulting ammonia molecule is channeled to the active site of PdxS. The polypeptide is Pyridoxal 5'-phosphate synthase subunit PdxT (Thermotoga neapolitana (strain ATCC 49049 / DSM 4359 / NBRC 107923 / NS-E)).